A 174-amino-acid polypeptide reads, in one-letter code: NADH-ubiquinone oxidoreductase chain 6 (174 aa).

Helical transmembrane passes span 1–21 (MTYA…GFSS), 24–44 (SPIY…AVIL), 47–67 (GGGY…MVVF), 86–106 (AEVL…VLWV), 111–131 (GVVV…EGEG), and 151–171 (WLVV…IEIA).

This sequence belongs to the complex I subunit 6 family. In terms of assembly, core subunit of respiratory chain NADH dehydrogenase (Complex I) which is composed of 45 different subunits.

The protein resides in the mitochondrion inner membrane. The enzyme catalyses a ubiquinone + NADH + 5 H(+)(in) = a ubiquinol + NAD(+) + 4 H(+)(out). Core subunit of the mitochondrial membrane respiratory chain NADH dehydrogenase (Complex I) which catalyzes electron transfer from NADH through the respiratory chain, using ubiquinone as an electron acceptor. Essential for the catalytic activity and assembly of complex I. The sequence is that of NADH-ubiquinone oxidoreductase chain 6 (MT-ND6) from Pongo pygmaeus (Bornean orangutan).